The primary structure comprises 595 residues: Chaperone protein HscA homolog (595 aa).

The protein belongs to the heat shock protein 70 family.

Chaperone involved in the maturation of iron-sulfur cluster-containing proteins. Has a low intrinsic ATPase activity which is markedly stimulated by HscB. The sequence is that of Chaperone protein HscA homolog from Rickettsia akari (strain Hartford).